Consider the following 197-residue polypeptide: Guanylyl cyclase-activating protein 2 (197 aa).

A lipid anchor (N-myristoyl glycine) is attached at Gly-2. EF-hand domains follow at residues 15–50 (DVAELQEWYKKFVVECPSGTLFMHEFKRFFGVQDNQ), 51–86 (EAADYVEHMFRAFDKNGDNTIDFLEYVAALNLVLRG), 87–122 (KLEHKLKWTFKVYDRDGNGCIDKTELLEIVESIYNL), and 138–173 (SPEQVVDRIFQLVDENGDGQLSLDEFIDGARKDKWV). Residues Asp-64, Asn-66, Asp-68, Thr-70, Glu-75, Asp-100, Asp-102, Asn-104, Cys-106, Glu-111, Asp-151, Asn-153, Asp-155, Gln-157, and Glu-162 each contribute to the Ca(2+) site.

As to expression, low expression in retina.

In terms of biological role, stimulates guanylyl cyclase 1 (GC1) and GC2 when free calcium ions concentration is low and inhibits guanylyl cyclases when free calcium ions concentration is elevated. This Ca(2+)-sensitive regulation of guanylyl cyclase (GC) is a key event in recovery of the dark state of rod photoreceptors following light exposure. The protein is Guanylyl cyclase-activating protein 2 (GUCA1B) of Lithobates pipiens (Northern leopard frog).